The following is a 211-amino-acid chain: Claudin-7 (211 aa).

The Cytoplasmic portion of the chain corresponds to 1-7 (MANSGLQ). The chain crosses the membrane as a helical span at residues 8-28 (LLGFSMALLGWVGLVACTAIP). Residues 29–81 (QWQMSSYAGDNIITAQAMYKGLWMDCVTQSTGMMSCKMYDSVLALSAALQATR) lie on the Extracellular side of the membrane. The chain crosses the membrane as a helical span at residues 82–102 (ALMVVSLVLGFLAMFVATMGM). Residues 103-117 (KCTRCGGDDKVKKAR) lie on the Cytoplasmic side of the membrane. The chain crosses the membrane as a helical span at residues 118–138 (IAMGGGIIFIVAGLAALVACS). Residues 139-160 (WYGHQIVTDFYNPLIPTNIKYE) lie on the Extracellular side of the membrane. A helical transmembrane segment spans residues 161–181 (FGPAIFIGWAGSALVILGGAL). Residues 182 to 211 (LSCSCPGNESKAGYRVPRSYPKSNSSKEYV) are Cytoplasmic-facing. The interactions with TJP1, TJP2 and TJP3 stretch occupies residues 210–211 (YV).

It belongs to the claudin family. As to quaternary structure, directly interacts with TJP1/ZO-1, TJP2/ZO-2 and TJP3/ZO-3. The phosphorylated form interacts with EPCAM. Does not interact with CD81. Post-translationally, phosphorylated. As to expression, expressed in kidney, lung and prostate. Isoform 1 seems to be predominant, except in some normal prostate samples, where isoform 2 is the major form. Down-regulated in breast cancers, including ductal carcinoma in situ (DCIS), lobular carcinoma in situ (LCIS) and invasive ductal carcinoma (IDC) (at protein level), as well as in several cancer cell lines. Loss of expression correlates with histological grade, occurring predominantly in high-grade lesions.

Its subcellular location is the cell membrane. The protein localises to the basolateral cell membrane. It is found in the cell junction. It localises to the tight junction. Plays a major role in tight junction-specific obliteration of the intercellular space. In Homo sapiens (Human), this protein is Claudin-7 (CLDN7).